A 441-amino-acid chain; its full sequence is Xaa-Pro dipeptidase (441 aa).

Mn(2+) contacts are provided by D244, D255, H336, E381, and E420.

It belongs to the peptidase M24B family. Bacterial-type prolidase subfamily. Mn(2+) is required as a cofactor.

It carries out the reaction Xaa-L-Pro dipeptide + H2O = an L-alpha-amino acid + L-proline. Functionally, splits dipeptides with a prolyl residue in the C-terminal position. In Xanthomonas oryzae pv. oryzae (strain MAFF 311018), this protein is Xaa-Pro dipeptidase.